A 246-amino-acid polypeptide reads, in one-letter code: Glandular kallikrein (246 aa).

Positions 1 to 7 are excised as a propeptide; it reads APPIQSR. Positions 8–243 constitute a Peptidase S1 domain; sequence IIGGRECEKN…YLDWINDTIT (236 aa). 5 cysteine pairs are disulfide-bonded: Cys14-Cys158, Cys33-Cys49, Cys135-Cys204, Cys169-Cys183, and Cys194-Cys219. Residue His48 is the Charge relay system of the active site. Asn85 carries an N-linked (GlcNAc...) asparagine glycan. The tract at residues 85–104 is kallikrein (autolysis) loop; the sequence is NLSLLKXHTKADGKDYSHDL. Asp103 (charge relay system) is an active-site residue. Ser198 acts as the Charge relay system in catalysis. A glycan (N-linked (GlcNAc...) asparagine) is linked at Asn239.

Belongs to the peptidase S1 family. Kallikrein subfamily. In terms of assembly, monomer.

The catalysed reaction is Preferential cleavage of Arg-|-Xaa bonds in small molecule substrates. Highly selective action to release kallidin (lysyl-bradykinin) from kininogen involves hydrolysis of Met-|-Xaa or Leu-|-Xaa.. Functionally, glandular kallikreins cleave Met-Lys and Arg-Ser bonds in kininogen to release Lys-bradykinin. This Sus scrofa (Pig) protein is Glandular kallikrein.